The primary structure comprises 644 residues: Subversion of eukaryotic traffic protein A (644 aa).

Residues Met1–Asp400 are glucosyltransferase. The tract at residues Pro401–Ile644 is ptdIns(3)P-binding and localization domain.

Post-translationally, ubiquitinated and polyubiquitinated when ectopically produced in both yeast and mammalian cells; however it is unsure if this modification occurs during the L.pneumophila infection of host cells.

It is found in the secreted. Its function is as follows. Secreted effector that interferes with vesicular trafficking of host cells. Possesses glucohydrolase and mono-O-glucosyltransferase activity by using UDP-glucose as a sugar donor substrate. Is able to glucosylate histones H4 and H3.1 in vitro, but it is unlikely that histones are the natural substrates for SetA. May glycosylate a component of the host cell vesicle trafficking machinery during L.pneumophila infection. Binds with high specificity to phosphatidylinositol 3-phosphate (PtdIns(3)P), (with a dissociation constant value of 809 nM), which guides SetA to the cytosolic leaflet of the early phagosome of the host cell. This is Subversion of eukaryotic traffic protein A (setA) from Legionella pneumophila subsp. pneumophila (strain Philadelphia 1 / ATCC 33152 / DSM 7513).